A 95-amino-acid polypeptide reads, in one-letter code: Protein TusB (95 aa).

Belongs to the DsrH/TusB family. As to quaternary structure, heterohexamer, formed by a dimer of trimers. The hexameric TusBCD complex contains 2 copies each of TusB, TusC and TusD. The TusBCD complex interacts with TusE.

It is found in the cytoplasm. In terms of biological role, part of a sulfur-relay system required for 2-thiolation of 5-methylaminomethyl-2-thiouridine (mnm(5)s(2)U) at tRNA wobble positions. The chain is Protein TusB from Photorhabdus laumondii subsp. laumondii (strain DSM 15139 / CIP 105565 / TT01) (Photorhabdus luminescens subsp. laumondii).